The sequence spans 398 residues: 1-deoxy-D-xylulose 5-phosphate reductoisomerase (398 aa).

Threonine 10, glycine 11, serine 12, isoleucine 13, glycine 36, lysine 37, asparagine 38, and asparagine 124 together coordinate NADPH. Lysine 125 provides a ligand contact to 1-deoxy-D-xylulose 5-phosphate. Glutamate 126 is a binding site for NADPH. Position 150 (aspartate 150) interacts with Mn(2+). The 1-deoxy-D-xylulose 5-phosphate site is built by serine 151, glutamate 152, serine 186, and histidine 209. Residue glutamate 152 coordinates Mn(2+). Glycine 215 is a binding site for NADPH. Residues serine 222, asparagine 227, lysine 228, and glutamate 231 each contribute to the 1-deoxy-D-xylulose 5-phosphate site. A Mn(2+)-binding site is contributed by glutamate 231.

The protein belongs to the DXR family. In terms of assembly, homodimer. The cofactor is Mg(2+). Requires Mn(2+) as cofactor.

It carries out the reaction 2-C-methyl-D-erythritol 4-phosphate + NADP(+) = 1-deoxy-D-xylulose 5-phosphate + NADPH + H(+). It participates in isoprenoid biosynthesis; isopentenyl diphosphate biosynthesis via DXP pathway; isopentenyl diphosphate from 1-deoxy-D-xylulose 5-phosphate: step 1/6. Catalyzes the NADPH-dependent rearrangement and reduction of 1-deoxy-D-xylulose-5-phosphate (DXP) to 2-C-methyl-D-erythritol 4-phosphate (MEP). The polypeptide is 1-deoxy-D-xylulose 5-phosphate reductoisomerase (Shigella flexneri).